A 321-amino-acid chain; its full sequence is Cytochrome f (321 aa).

The first 38 residues, 1-38, serve as a signal peptide directing secretion; sequence MINLFLLKYKTAFSTFLKPFAYLSLILSVCFYSIQAQA. Heme-binding residues include F39, C59, C62, and H63. The helical transmembrane segment at 287–306 threads the bilayer; sequence VKGLIAFFFTVILAQILLVL.

It belongs to the cytochrome f family. As to quaternary structure, the 4 large subunits of the cytochrome b6-f complex are cytochrome b6, subunit IV (17 kDa polypeptide, petD), cytochrome f and the Rieske protein, while the 4 small subunits are PetG, PetL, PetM and PetN. The complex functions as a dimer. The cofactor is heme.

Its subcellular location is the plastid. The protein resides in the chloroplast thylakoid membrane. In terms of biological role, component of the cytochrome b6-f complex, which mediates electron transfer between photosystem II (PSII) and photosystem I (PSI), cyclic electron flow around PSI, and state transitions. In Guillardia theta (Cryptophyte), this protein is Cytochrome f (petA).